Reading from the N-terminus, the 929-residue chain is Collagen alpha-1(XII) chain (929 aa).

A VWFA 1 domain is found at 1–49 (DVEIFAVGVKDAVRSELEAIATPPTATHVYTVEDFDAFQRISFELTQSI). Fibronectin type-III domains follow at residues 67 to 156 (PPRD…LEVR), 158 to 250 (APRN…VGEP), 251 to 340 (KNLR…LQER), 342 to 432 (SPRD…ASPD), 434 to 521 (KIVK…LSPF), and 523 to 613 (APRS…TLRD). Residue N98 is glycosylated (N-linked (GlcNAc...) asparagine). S231, S324, and S415 each carry an O-linked (Xyl...) (chondroitin sulfate) serine glycan. The region spanning 633 to 805 (DIVLLVDGSW…SLLTNIVNDL (173 aa)) is the VWFA 2 domain. The Fibronectin type-III 7 domain occupies 821–910 (PPSNLVTSEP…AGTETTLPIP (90 aa)).

This sequence belongs to the fibril-associated collagens with interrupted helices (FACIT) family. Trimer of identical chains each containing 190 kDa of non-triple-helical sequences. In terms of processing, the triple-helical tail is stabilized by disulfide bonds at each end. Post-translationally, prolines at the third position of the tripeptide repeating unit (G-X-Y) are hydroxylated in some or all of the chains.

Its subcellular location is the secreted. It is found in the extracellular space. It localises to the extracellular matrix. In terms of biological role, type XII collagen interacts with type I collagen-containing fibrils, the COL1 domain could be associated with the surface of the fibrils, and the COL2 and NC3 domains may be localized in the perifibrillar matrix. Could play a developmental role in regeneration. The polypeptide is Collagen alpha-1(XII) chain (Notophthalmus viridescens (Eastern newt)).